A 128-amino-acid chain; its full sequence is Cytochrome c oxidase subunit 5B, mitochondrial (128 aa).

Residues 1–30 (MASRLLRGVGALAAQALRRTARGAAVTRSM) constitute a mitochondrion transit peptide. Residues K67 and K85 each carry the N6-acetyllysine modification. The Zn(2+) site is built by C90, C92, C112, and C115. At K120 the chain carries N6-acetyllysine.

The protein belongs to the cytochrome c oxidase subunit 5B family. Component of the cytochrome c oxidase (complex IV, CIV), a multisubunit enzyme composed of 14 subunits. The complex is composed of a catalytic core of 3 subunits MT-CO1, MT-CO2 and MT-CO3, encoded in the mitochondrial DNA, and 11 supernumerary subunits COX4I, COX5A, COX5B, COX6A, COX6B, COX6C, COX7A, COX7B, COX7C, COX8 and NDUFA4, which are encoded in the nuclear genome. The complex exists as a monomer or a dimer and forms supercomplexes (SCs) in the inner mitochondrial membrane with NADH-ubiquinone oxidoreductase (complex I, CI) and ubiquinol-cytochrome c oxidoreductase (cytochrome b-c1 complex, complex III, CIII), resulting in different assemblies (supercomplex SCI(1)III(2)IV(1) and megacomplex MCI(2)III(2)IV(2)).

It localises to the mitochondrion inner membrane. The protein operates within energy metabolism; oxidative phosphorylation. Its function is as follows. Component of the cytochrome c oxidase, the last enzyme in the mitochondrial electron transport chain which drives oxidative phosphorylation. The respiratory chain contains 3 multisubunit complexes succinate dehydrogenase (complex II, CII), ubiquinol-cytochrome c oxidoreductase (cytochrome b-c1 complex, complex III, CIII) and cytochrome c oxidase (complex IV, CIV), that cooperate to transfer electrons derived from NADH and succinate to molecular oxygen, creating an electrochemical gradient over the inner membrane that drives transmembrane transport and the ATP synthase. Cytochrome c oxidase is the component of the respiratory chain that catalyzes the reduction of oxygen to water. Electrons originating from reduced cytochrome c in the intermembrane space (IMS) are transferred via the dinuclear copper A center (CU(A)) of subunit 2 and heme A of subunit 1 to the active site in subunit 1, a binuclear center (BNC) formed by heme A3 and copper B (CU(B)). The BNC reduces molecular oxygen to 2 water molecules using 4 electrons from cytochrome c in the IMS and 4 protons from the mitochondrial matrix. The polypeptide is Cytochrome c oxidase subunit 5B, mitochondrial (Cox5b) (Mus musculus (Mouse)).